Consider the following 1518-residue polypeptide: Hormone receptor 4 (1518 aa).

5 disordered regions span residues 30-50, 145-327, 380-587, 672-820, and 887-913; these read RCSSDGESIADTSTSSPDLLA, TSST…KLSE, PSRI…QPQA, VGVG…SSVA, and SSNSTGLGGVGGGMGGRNLEAPHEPTD. The span at 34 to 46 shows a compositional bias: polar residues; the sequence is DGESIADTSTSSP. 2 stretches are compositionally biased toward low complexity: residues 145-189 and 208-219; these read TSST…SSSG and SSSSAISAAAAS. A compositionally biased stretch (gly residues) spans 238 to 260; the sequence is EGGGPAGDGSGATGGGNTSGGST. The span at 291–323 shows a compositional bias: low complexity; the sequence is STTTTTGRPTLTPTNGVLSSASAGTGISTGSSA. Positions 400-429 are enriched in basic and acidic residues; that stretch reads QRERERERDRERDRERERERDRDREREREQ. 2 stretches are compositionally biased toward polar residues: residues 430–451 and 475–489; these read SISSSQQHLSRVSASPPTQLSH and RKSSPPTEHLLSQSM. Low complexity-rich tracts occupy residues 490-529, 546-586, 681-705, and 738-799; these read QHLTQQQAIHLHHLLGQQQQQQQASHPQQQQQQQHSPHSL, HHQQ…QQPQ, GSVQCPSPHPSSSSSSSQLSPQTPS, and GQSH…PSSS. Composition is skewed to gly residues over residues 800-812 and 892-902; these read SGGGSVSGGGVGG and GLGGVGGGMGG. Residues 918–993 constitute a DNA-binding region (nuclear receptor); it reads PLVCMICEDK…QGMVLQAVRE (76 aa). 2 NR C4-type zinc fingers span residues 921 to 941 and 957 to 976; these read CMICEDKATGLHYGIITCEGC and CVADGTCEITKAQRNRCQYC. 3 disordered regions span residues 1015-1101, 1142-1210, and 1341-1371; these read KHKK…AAVA, LLQA…LPPH, and KRRGEGGGSRHGSPASTPLSTPTGTPLSTPI. Residues 1021–1060 are compositionally biased toward low complexity; that stretch reads QKQQQQAAQQQQQQAAAQQQHQQQQQHQQHQQHQQQQLHS. Residues 1061–1077 are compositionally biased toward basic residues; sequence PLHHHHHQGHQSHHAQQ. Composition is skewed to low complexity over residues 1078-1101 and 1144-1193; these read QHHPQLSPHHLLSPQQQQLAAAVA and QAPP…HHQQ. The span at 1194-1205 shows a compositional bias: gly residues; that stretch reads QGGGGGGAGGGA. The NR LBD domain occupies 1250–1518; that stretch reads HALGMIQTLI…PFVLNSASIR (269 aa). Over residues 1351–1368 the composition is skewed to low complexity; it reads HGSPASTPLSTPTGTPLS.

Belongs to the nuclear hormone receptor family. NR1 subfamily. In terms of tissue distribution, during L2 and L3 stages, strong constitutive expression is seen in the ring gland. Lower expression is detected in specific neurons of the central nervous system (CNS) (at protein level).

It is found in the nucleus. Its function is as follows. Coordinates growth and maturation by mediating endocrine responses to the attainment of critical weight during larval development. Plays a central role in the genetic cascades triggered by the steroid hormone ecdysone at the onset of metamorphosis, acting as both a repressor of the early ecdysone-induced regulatory genes and an inducer of the ftz-f1 midprepupal competence factor. The polypeptide is Hormone receptor 4 (Hr4) (Drosophila melanogaster (Fruit fly)).